Consider the following 124-residue polypeptide: Large ribosomal subunit protein bL19 (124 aa).

Belongs to the bacterial ribosomal protein bL19 family.

In terms of biological role, this protein is located at the 30S-50S ribosomal subunit interface and may play a role in the structure and function of the aminoacyl-tRNA binding site. This is Large ribosomal subunit protein bL19 from Acidiphilium cryptum (strain JF-5).